Here is a 273-residue protein sequence, read N- to C-terminus: Glutamate racemase (273 aa).

Residues 17–18 (DS) and 49–50 (YG) contribute to the substrate site. Catalysis depends on cysteine 80, which acts as the Proton donor/acceptor. 81-82 (NT) is a binding site for substrate. Cysteine 190 functions as the Proton donor/acceptor in the catalytic mechanism. 191–192 (TH) lines the substrate pocket.

Belongs to the aspartate/glutamate racemases family.

The catalysed reaction is L-glutamate = D-glutamate. Its pathway is cell wall biogenesis; peptidoglycan biosynthesis. Its function is as follows. Provides the (R)-glutamate required for cell wall biosynthesis. This Corynebacterium glutamicum (strain ATCC 13032 / DSM 20300 / JCM 1318 / BCRC 11384 / CCUG 27702 / LMG 3730 / NBRC 12168 / NCIMB 10025 / NRRL B-2784 / 534) protein is Glutamate racemase.